The primary structure comprises 437 residues: Probable glycine dehydrogenase (decarboxylating) subunit 1 (437 aa).

Belongs to the GcvP family. N-terminal subunit subfamily. In terms of assembly, the glycine cleavage system is composed of four proteins: P, T, L and H. In this organism, the P 'protein' is a heterodimer of two subunits.

The catalysed reaction is N(6)-[(R)-lipoyl]-L-lysyl-[glycine-cleavage complex H protein] + glycine + H(+) = N(6)-[(R)-S(8)-aminomethyldihydrolipoyl]-L-lysyl-[glycine-cleavage complex H protein] + CO2. Its function is as follows. The glycine cleavage system catalyzes the degradation of glycine. The P protein binds the alpha-amino group of glycine through its pyridoxal phosphate cofactor; CO(2) is released and the remaining methylamine moiety is then transferred to the lipoamide cofactor of the H protein. The sequence is that of Probable glycine dehydrogenase (decarboxylating) subunit 1 from Thermotoga petrophila (strain ATCC BAA-488 / DSM 13995 / JCM 10881 / RKU-1).